The chain runs to 394 residues: Mannosyl-3-phosphoglycerate synthase (394 aa).

Belongs to the glycosyltransferase 2 family.

The protein resides in the cytoplasm. The enzyme catalyses (2R)-3-phosphoglycerate + GDP-alpha-D-mannose = 2-O-(alpha-D-mannosyl)-3-phosphoglycerate + GDP + H(+). The protein operates within carbohydrate biosynthesis; 2-(alpha-D-mannosyl)-D-glycerate biosynthesis; 2-(alpha-D-mannosyl)-D-glycerate from GDP-alpha-D-mannose (MPG route): step 1/2. Functionally, transfers a mannosyl group from GDP-mannose to phosphoglycerate to form mannosyl-3-phosphoglycerate (MPG). This chain is Mannosyl-3-phosphoglycerate synthase (mngA), found in Pyrococcus furiosus (strain ATCC 43587 / DSM 3638 / JCM 8422 / Vc1).